The primary structure comprises 567 residues: Glucose-6-phosphate isomerase, cytosolic A (567 aa).

D-glucose 6-phosphate is bound by residues 156-157, 212-217, glutamine 356, glutamate 360, histidine 391, and lysine 516; these read GS and SKTFTT. Glutamate 360 functions as the Proton donor in the catalytic mechanism. Residues histidine 391 and lysine 516 contribute to the active site.

This sequence belongs to the GPI family. In terms of assembly, homodimer.

Its subcellular location is the cytoplasm. It carries out the reaction alpha-D-glucose 6-phosphate = beta-D-fructose 6-phosphate. The protein operates within carbohydrate degradation; glycolysis; D-glyceraldehyde 3-phosphate and glycerone phosphate from D-glucose: step 2/4. Its function is as follows. Catalyzes the conversion of glucose-6-phosphate to fructose-6-phosphate, the second step in glycolysis, and the reverse reaction during gluconeogenesis. This is Glucose-6-phosphate isomerase, cytosolic A from Oryza sativa subsp. japonica (Rice).